The chain runs to 194 residues: Protein cholesin (194 aa).

Residues 1–83 (MAKQKRKVPE…RKKEERQRLR (83 aa)) form a disordered region. Phosphoserine occurs at positions 23 and 59. Residues 61 to 83 (EEQRVLERKLKKERKKEERQRLR) show a composition bias toward basic and acidic residues. Phosphoserine is present on residues Ser-97 and Ser-175.

As to expression, secreted from the instestine, secretion is induced by feeding and cholesterol absorption.

It localises to the secreted. Functionally, hormone secreted from the intestine in response to cholesterol, where it acts to inhibit cholesterol synthesis in the liver and VLDL secretion,leading to a reduction in circulating cholesterol levels. Acts through binding to its receptor, GPR146. In Homo sapiens (Human), this protein is Protein cholesin.